A 429-amino-acid chain; its full sequence is Chaperone SurA (429 aa).

Positions 1–18 (MFKRIALVCALFSGVCFA) are cleaved as a signal peptide. PpiC domains are found at residues 170-271 (NLTY…KLVA) and 281-380 (ITQT…EVIA).

The protein resides in the periplasm. The enzyme catalyses [protein]-peptidylproline (omega=180) = [protein]-peptidylproline (omega=0). Chaperone involved in the correct folding and assembly of outer membrane proteins. Recognizes specific patterns of aromatic residues and the orientation of their side chains, which are found more frequently in integral outer membrane proteins. May act in both early periplasmic and late outer membrane-associated steps of protein maturation. The polypeptide is Chaperone SurA (Legionella pneumophila (strain Lens)).